The primary structure comprises 520 residues: Putative lipase ATG15 (520 aa).

Over 1–14 (MLHKSPSRKRFASP) the chain is Cytoplasmic. A helical; Signal-anchor for type II membrane protein transmembrane segment spans residues 15–35 (LHLGCILTLTVLCLIAYYFAL). The Lumenal segment spans residues 36–520 (PDYLSVGKSS…WLGFCTKYEL (485 aa)). Asparagine 173, asparagine 202, and asparagine 208 each carry an N-linked (GlcNAc...) asparagine glycan. Residue serine 332 is the Charge relay system of the active site.

The protein belongs to the AB hydrolase superfamily. Lipase family. As to quaternary structure, binds to both phosphatidylinositol (PI) and phosphatidylinositol 3,5-bisphosphate (PIP2). Glycosylated.

Its subcellular location is the endosome. The protein localises to the multivesicular body membrane. The protein resides in the prevacuolar compartment membrane. It catalyses the reaction a triacylglycerol + H2O = a diacylglycerol + a fatty acid + H(+). In terms of biological role, lipase which is essential for lysis of subvacuolar cytoplasm to vacuole targeted bodies and intravacuolar autophagic bodies. Involved in the lysis of intravacuolar multivesicular body (MVB) vesicles. The intravacuolar membrane disintegration by ATG15 is critical to life span extension. The polypeptide is Putative lipase ATG15 (ATG15) (Saccharomyces cerevisiae (strain ATCC 204508 / S288c) (Baker's yeast)).